The sequence spans 464 residues: Protein FAM90A12 (464 aa).

3 disordered regions span residues 1-42 (MMAR…DPRL), 70-389 (PATL…HDGA), and 411-437 (APSFHSPEKPGAFLAQSPHVSEKSEAP). 2 stretches are compositionally biased toward basic and acidic residues: residues 74 to 89 (GKKEGKENLKPWKPRA) and 97 to 114 (NKDKGEKEERPRQQDPQR). The span at 180–197 (LASLSPLRKASLSSSSSL) shows a compositional bias: low complexity.

Belongs to the FAM90 family.

This is Protein FAM90A12 from Homo sapiens (Human).